Here is a 129-residue protein sequence, read N- to C-terminus: Phosphoribosyl-AMP cyclohydrolase (129 aa).

Position 77 (aspartate 77) interacts with Mg(2+). Cysteine 78 serves as a coordination point for Zn(2+). The Mg(2+) site is built by aspartate 79 and aspartate 81. Zn(2+) contacts are provided by cysteine 94 and cysteine 101.

It belongs to the PRA-CH family. As to quaternary structure, homodimer. Mg(2+) serves as cofactor. Requires Zn(2+) as cofactor.

The protein localises to the cytoplasm. The catalysed reaction is 1-(5-phospho-beta-D-ribosyl)-5'-AMP + H2O = 1-(5-phospho-beta-D-ribosyl)-5-[(5-phospho-beta-D-ribosylamino)methylideneamino]imidazole-4-carboxamide. It participates in amino-acid biosynthesis; L-histidine biosynthesis; L-histidine from 5-phospho-alpha-D-ribose 1-diphosphate: step 3/9. Functionally, catalyzes the hydrolysis of the adenine ring of phosphoribosyl-AMP. The sequence is that of Phosphoribosyl-AMP cyclohydrolase from Pelotomaculum thermopropionicum (strain DSM 13744 / JCM 10971 / SI).